Consider the following 341-residue polypeptide: Methionine import ATP-binding protein MetN (341 aa).

An ABC transporter domain is found at 9–247 (ISVQKVNKEI…PRSSITEELF (239 aa)). 41–48 (GHSGSGKS) provides a ligand contact to ATP.

Belongs to the ABC transporter superfamily. Methionine importer (TC 3.A.1.24) family. As to quaternary structure, the complex is composed of two ATP-binding proteins (MetN), two transmembrane proteins (MetI) and a solute-binding protein (MetQ).

It is found in the cell inner membrane. The catalysed reaction is L-methionine(out) + ATP + H2O = L-methionine(in) + ADP + phosphate + H(+). It catalyses the reaction D-methionine(out) + ATP + H2O = D-methionine(in) + ADP + phosphate + H(+). Part of the ABC transporter complex MetNIQ involved in methionine import. Responsible for energy coupling to the transport system. This is Methionine import ATP-binding protein MetN from Chlamydia caviae (strain ATCC VR-813 / DSM 19441 / 03DC25 / GPIC) (Chlamydophila caviae).